A 316-amino-acid polypeptide reads, in one-letter code: Petrobactin import system permease protein YclN (316 aa).

The next 8 helical transmembrane spans lie at 5-25 (YLFI…VEDL), 49-69 (LISI…MQQI), 94-114 (LLLF…VFAL), 133-153 (IFIP…ATFI), 181-201 (LLYL…KFTL), 224-244 (LIIV…LPFL), 268-288 (VLLG…IIFP), and 290-310 (EISI…FMLL).

Belongs to the binding-protein-dependent transport system permease family. FecCD subfamily. As to quaternary structure, the complex is composed of two ATP-binding proteins (YclP), two transmembrane proteins (YclN and YclO) and a solute-binding protein (YclQ).

It is found in the cell membrane. Part of the ABC transporter complex YclNOPQ involved in uptake of ferric-petrobactin. Petrobactin is a photoreactive 3,4-catecholate siderophore produced by many members of the B.cereus group, including B.anthracis. Probably responsible for the translocation of the substrate across the membrane. In Bacillus subtilis (strain 168), this protein is Petrobactin import system permease protein YclN (yclN).